Here is a 248-residue protein sequence, read N- to C-terminus: Probable transcriptional regulatory protein PSPPH_3775 (248 aa).

This sequence belongs to the TACO1 family.

The protein localises to the cytoplasm. This Pseudomonas savastanoi pv. phaseolicola (strain 1448A / Race 6) (Pseudomonas syringae pv. phaseolicola (strain 1448A / Race 6)) protein is Probable transcriptional regulatory protein PSPPH_3775.